Consider the following 143-residue polypeptide: Large ribosomal subunit protein uL15 (143 aa).

The disordered stretch occupies residues 1-57 (MQLNNLKPAAGSKHAKRRVGRGIGSGLGKTAGRGHKGQKSRSGGFHKVGFEGGQMPL). Residues 21 to 31 (RGIGSGLGKTA) are compositionally biased toward gly residues.

This sequence belongs to the universal ribosomal protein uL15 family. In terms of assembly, part of the 50S ribosomal subunit.

Its function is as follows. Binds to the 23S rRNA. The chain is Large ribosomal subunit protein uL15 from Ralstonia pickettii (strain 12J).